We begin with the raw amino-acid sequence, 487 residues long: Aspartyl/glutamyl-tRNA(Asn/Gln) amidotransferase subunit B (487 aa).

This sequence belongs to the GatB/GatE family. GatB subfamily. Heterotrimer of A, B and C subunits.

The catalysed reaction is L-glutamyl-tRNA(Gln) + L-glutamine + ATP + H2O = L-glutaminyl-tRNA(Gln) + L-glutamate + ADP + phosphate + H(+). It carries out the reaction L-aspartyl-tRNA(Asn) + L-glutamine + ATP + H2O = L-asparaginyl-tRNA(Asn) + L-glutamate + ADP + phosphate + 2 H(+). In terms of biological role, allows the formation of correctly charged Asn-tRNA(Asn) or Gln-tRNA(Gln) through the transamidation of misacylated Asp-tRNA(Asn) or Glu-tRNA(Gln) in organisms which lack either or both of asparaginyl-tRNA or glutaminyl-tRNA synthetases. The reaction takes place in the presence of glutamine and ATP through an activated phospho-Asp-tRNA(Asn) or phospho-Glu-tRNA(Gln). The chain is Aspartyl/glutamyl-tRNA(Asn/Gln) amidotransferase subunit B from Leptospira biflexa serovar Patoc (strain Patoc 1 / Ames).